A 145-amino-acid polypeptide reads, in one-letter code: D-aminoacyl-tRNA deacylase (145 aa).

A Gly-cisPro motif, important for rejection of L-amino acids motif is present at residues 137–138; it reads GP.

The protein belongs to the DTD family. As to quaternary structure, homodimer.

The protein localises to the cytoplasm. The catalysed reaction is glycyl-tRNA(Ala) + H2O = tRNA(Ala) + glycine + H(+). It carries out the reaction a D-aminoacyl-tRNA + H2O = a tRNA + a D-alpha-amino acid + H(+). An aminoacyl-tRNA editing enzyme that deacylates mischarged D-aminoacyl-tRNAs. Also deacylates mischarged glycyl-tRNA(Ala), protecting cells against glycine mischarging by AlaRS. Acts via tRNA-based rather than protein-based catalysis; rejects L-amino acids rather than detecting D-amino acids in the active site. By recycling D-aminoacyl-tRNA to D-amino acids and free tRNA molecules, this enzyme counteracts the toxicity associated with the formation of D-aminoacyl-tRNA entities in vivo and helps enforce protein L-homochirality. The sequence is that of D-aminoacyl-tRNA deacylase from Pseudomonas aeruginosa (strain UCBPP-PA14).